The primary structure comprises 121 residues: Basic phospholipase A2 homolog piratoxin-1 (121 aa).

Intrachain disulfides connect C26/C115, C28/C44, C43/C95, C49/C121, C50/C88, C57/C81, and C75/C86. An important for membrane-damaging activities in eukaryotes and bacteria; heparin-binding region spans residues 105-117; sequence KLYRYHLKPFCKK.

The protein belongs to the phospholipase A2 family. Group II subfamily. K49 sub-subfamily. As to quaternary structure, homodimer; non-covalently linked. Expressed by the venom gland.

The protein resides in the secreted. Its activity is regulated as follows. Rosmarinic acid inhibits the myotoxic activity. Bromophenacyl bromide (BPB) inhibits the myotoxic activity through a covalent binding. Caffeic acid and aristolochic acid, two plant compounds used in folk medicine used to treat envenomation, inhibit the myotoxic activity. Snake venom phospholipase A2 (PLA2) homolog that lacks enzymatic activity. Is myotoxic and displays edema-inducing activities. Induces neuromuscular blockage. A model of myotoxic mechanism has been proposed: an apo Lys49-PLA2 is activated by the entrance of a hydrophobic molecule (e.g. fatty acid) at the hydrophobic channel of the protein leading to a reorientation of a monomer. This reorientation causes a transition between 'inactive' to 'active' states, causing alignment of C-terminal and membrane-docking sites (MDoS) side-by-side and putting the membrane-disruption sites (MDiS) in the same plane, exposed to solvent and in a symmetric position for both monomers. The MDoS region stabilizes the toxin on membrane by the interaction of charged residues with phospholipid head groups. Subsequently, the MDiS region destabilizes the membrane with penetration of hydrophobic residues. This insertion causes a disorganization of the membrane, allowing an uncontrolled influx of ions (i.e. calcium and sodium), and eventually triggering irreversible intracellular alterations and cell death. This is Basic phospholipase A2 homolog piratoxin-1 from Bothrops pirajai (Piraja's lancehead).